The following is a 352-amino-acid chain: ER-derived vesicles protein ERV41 (352 aa).

Residues 1–23 (MAGLKTFDAFPKTEEQYKKKSTK) are Cytoplasmic-facing. The helical transmembrane segment at 24–44 (GGLTSLLTYLFLLFIAWTEFG) threads the bilayer. At 45-311 (EYFGGYIDQQ…FLVRLVAICS (267 aa)) the chain is on the lumenal side. The helical transmembrane segment at 312–332 (FLVYCASWIFTLLDMALITIM) threads the bilayer. At 333-352 (GPKWSLRYQPDDKTKGILDR) the chain is on the cytoplasmic side. Residues 349–350 (IL) carry the Isoleucine-leucine motif motif.

The protein belongs to the ERGIC family. In terms of assembly, interacts with ERV46.

It is found in the endoplasmic reticulum membrane. The protein resides in the golgi apparatus membrane. Its subcellular location is the cytoplasmic vesicle. It localises to the COPII-coated vesicle membrane. In terms of biological role, constituent of COPII-coated endoplasmic reticulum-derived transport vesicles. Required for efficient transport of a subset of secretory proteins to the Golgi. The C-terminal Ile-Leu motif is required for exit from the endoplasmic reticulum. Facilitates retrograde transport from the Golgi to the endoplasmic reticulum. This is ER-derived vesicles protein ERV41 (ERV41) from Saccharomyces cerevisiae (strain ATCC 204508 / S288c) (Baker's yeast).